We begin with the raw amino-acid sequence, 506 residues long: Zinc finger and SCAN domain containing protein 4D (506 aa).

In terms of domain architecture, SCAN box spans serine 37 to cysteine 119. The disordered stretch occupies residues serine 238–lysine 264. 4 C2H2-type zinc fingers span residues phenylalanine 395–histidine 417, leucine 424–histidine 446, phenylalanine 452–histidine 474, and tyrosine 480–histidine 503.

In terms of tissue distribution, highly expressed at the 2-cell stage but its expression is rapidly turned off.

Its subcellular location is the nucleus. It is found in the chromosome. The protein localises to the telomere. In terms of biological role, transcription factor required to regulate early development. Binds telomeres and plays a key role in genomic stability by regulating telomere elongation. Acts as an activator of spontaneous telomere sister chromatid exchange (T-SCE) and telomere elongation. The protein is Zinc finger and SCAN domain containing protein 4D (Zscan4d) of Mus musculus (Mouse).